The primary structure comprises 369 residues: Velvet complex subunit B (369 aa).

Disordered stretches follow at residues 1 to 54, 138 to 174, and 346 to 369; these read MYAV…STVH, SIST…VGQP, and KDGV…DNEY. The segment covering 13–27 has biased composition (pro residues); the sequence is HPPPLSMDRIPPPST. In terms of domain architecture, Velvet spans 53 to 345; it reads VHDGRIWSLQ…ANQGIKIPIR (293 aa).

The protein belongs to the velvet family. VelB subfamily. Component of the heterotrimeric velvet complex composed of laeA, veA and velB; VeA acting as a bridging protein between laeA and velB. Interacts directly with veA. Forms a heterodimeric complex with vosA; the formation of the velB-vosA complex is light-dependent.

Its subcellular location is the nucleus. The protein resides in the cytoplasm. In terms of biological role, component of the velvet transcription factor complex that controls sexual/asexual developmental ratio in response to light, promoting sexual development in the darkness while stimulating asexual sporulation under illumination. The velvet complex acts as a global regulator for secondary metabolite gene expression. Component of the velB-VosA heterodimeric complex that plays a dual role in activating genes associated with spore maturation and repressing certain development-associated genes. The velB-VosA complex binds DNA through the DNA-binding domain of vosA that recognizes an 11-nucleotide consensus sequence 5'-CTGGCCGCGGC-3' consisting of two motifs in the promoters of key developmental regulatory genes. The vosA-velB complex binds to the beta-glucan synthase fksA gene promoter in asexual spores for repression. The sequence is that of Velvet complex subunit B from Emericella nidulans (strain FGSC A4 / ATCC 38163 / CBS 112.46 / NRRL 194 / M139) (Aspergillus nidulans).